We begin with the raw amino-acid sequence, 417 residues long: UDP-N-acetylglucosamine 1-carboxyvinyltransferase 2 (417 aa).

22–23 (KN) is a phosphoenolpyruvate binding site. Arg-92 is a binding site for UDP-N-acetyl-alpha-D-glucosamine. Cys-116 (proton donor) is an active-site residue. Cys-116 is modified (2-(S-cysteinyl)pyruvic acid O-phosphothioketal). Residues 121 to 125 (RPIDL), Asp-305, and Ile-327 contribute to the UDP-N-acetyl-alpha-D-glucosamine site.

This sequence belongs to the EPSP synthase family. MurA subfamily.

Its subcellular location is the cytoplasm. It catalyses the reaction phosphoenolpyruvate + UDP-N-acetyl-alpha-D-glucosamine = UDP-N-acetyl-3-O-(1-carboxyvinyl)-alpha-D-glucosamine + phosphate. It participates in cell wall biogenesis; peptidoglycan biosynthesis. In terms of biological role, cell wall formation. Adds enolpyruvyl to UDP-N-acetylglucosamine. This is UDP-N-acetylglucosamine 1-carboxyvinyltransferase 2 from Caldanaerobacter subterraneus subsp. tengcongensis (strain DSM 15242 / JCM 11007 / NBRC 100824 / MB4) (Thermoanaerobacter tengcongensis).